The chain runs to 472 residues: Ribosomal protein uS12 methylthiotransferase RimO (472 aa).

One can recognise an MTTase N-terminal domain in the interval 33–143; it reads NRIGFVSLGC…VLKHVHKYVP (111 aa). Residues Cys42, Cys78, Cys107, Cys175, Cys179, and Cys182 each contribute to the [4Fe-4S] cluster site. Positions 161-398 constitute a Radical SAM core domain; that stretch reads LTPKHYAYLK…MELQAEISAE (238 aa). The 67-residue stretch at 401 to 467 folds into the TRAM domain; sequence ARFVGRTLDI…EHDLWAEVVD (67 aa).

Belongs to the methylthiotransferase family. RimO subfamily. It depends on [4Fe-4S] cluster as a cofactor.

The protein localises to the cytoplasm. The enzyme catalyses L-aspartate(89)-[ribosomal protein uS12]-hydrogen + (sulfur carrier)-SH + AH2 + 2 S-adenosyl-L-methionine = 3-methylsulfanyl-L-aspartate(89)-[ribosomal protein uS12]-hydrogen + (sulfur carrier)-H + 5'-deoxyadenosine + L-methionine + A + S-adenosyl-L-homocysteine + 2 H(+). In terms of biological role, catalyzes the methylthiolation of an aspartic acid residue of ribosomal protein uS12. The polypeptide is Ribosomal protein uS12 methylthiotransferase RimO (Shewanella putrefaciens (strain CN-32 / ATCC BAA-453)).